Consider the following 250-residue polypeptide: Urease accessory protein UreD (250 aa).

It belongs to the UreD family. As to quaternary structure, ureD, UreF and UreG form a complex that acts as a GTP-hydrolysis-dependent molecular chaperone, activating the urease apoprotein by helping to assemble the nickel containing metallocenter of UreC. The UreE protein probably delivers the nickel.

The protein resides in the cytoplasm. In terms of biological role, required for maturation of urease via the functional incorporation of the urease nickel metallocenter. The sequence is that of Urease accessory protein UreD from Aliarcobacter butzleri (strain RM4018) (Arcobacter butzleri).